The chain runs to 1337 residues: DNA mismatch repair protein Msh6 (1337 aa).

The PWWP domain occupies 68-130 (PGDLVWAKME…IKYLRPYKGS (63 aa)). Positions 170-310 (AVCSEPSDTE…SEAPKRAAPV (141 aa)) are disordered. The segment covering 176-187 (SDTEEAEEEEME) has biased composition (acidic residues). The span at 226 to 248 (VLDSDSDRDGSDVEFKPDVKEAS) shows a compositional bias: basic and acidic residues. The span at 257–272 (DENEATDVETDEESIE) shows a compositional bias: acidic residues. A compositionally biased stretch (basic residues) spans 279–292 (PSKRKRGNVSKPSK). Positions 294-305 (SSLENEHSEAPK) are enriched in basic and acidic residues. 1111-1118 (GPNMGGKS) serves as a coordination point for ATP.

The protein belongs to the DNA mismatch repair MutS family.

The protein localises to the nucleus. Its function is as follows. Component of the post-replicative DNA mismatch repair system (MMR). Involved in B cell growth by positively regulating B cell proliferation and controlling replication efficiency. Controls cell cycle to prevent re-replication and defects in DNA damage-induced G2 checkpoint. Doesn't seem to counteract or control the immunoglobulin gene conversion (Ig GC) and to contribute to guanine/uracil mismatch repair. This Gallus gallus (Chicken) protein is DNA mismatch repair protein Msh6.